The following is a 412-amino-acid chain: Serine hydroxymethyltransferase (412 aa).

(6S)-5,6,7,8-tetrahydrofolate is bound by residues L120 and 124–126 (GHL). Position 229 is an N6-(pyridoxal phosphate)lysine (K229). 352 to 354 (SPF) provides a ligand contact to (6S)-5,6,7,8-tetrahydrofolate.

It belongs to the SHMT family. In terms of assembly, homodimer. The cofactor is pyridoxal 5'-phosphate.

Its subcellular location is the cytoplasm. It carries out the reaction (6R)-5,10-methylene-5,6,7,8-tetrahydrofolate + glycine + H2O = (6S)-5,6,7,8-tetrahydrofolate + L-serine. The protein operates within one-carbon metabolism; tetrahydrofolate interconversion. It participates in amino-acid biosynthesis; glycine biosynthesis; glycine from L-serine: step 1/1. Catalyzes the reversible interconversion of serine and glycine with tetrahydrofolate (THF) serving as the one-carbon carrier. This reaction serves as the major source of one-carbon groups required for the biosynthesis of purines, thymidylate, methionine, and other important biomolecules. Also exhibits THF-independent aldolase activity toward beta-hydroxyamino acids, producing glycine and aldehydes, via a retro-aldol mechanism. The polypeptide is Serine hydroxymethyltransferase (Ruminiclostridium cellulolyticum (strain ATCC 35319 / DSM 5812 / JCM 6584 / H10) (Clostridium cellulolyticum)).